A 673-amino-acid chain; its full sequence is ATP-dependent DNA helicase Rep (673 aa).

One can recognise a UvrD-like helicase ATP-binding domain in the interval 1-280 (MRLNPGQQQA…IKLEQNYRSS (280 aa)). Residues 22–29 (AGAGSGKT) and R278 each bind ATP. In terms of domain architecture, UvrD-like helicase C-terminal spans 281 to 562 (GRILKAANIL…QLMTLHASKG (282 aa)).

It belongs to the helicase family. UvrD subfamily. Homodimer in association with DNA.

It carries out the reaction Couples ATP hydrolysis with the unwinding of duplex DNA by translocating in the 3'-5' direction.. The catalysed reaction is ATP + H2O = ADP + phosphate + H(+). With respect to regulation, binding to DNA induces dimerization, which is required for DNA helicase activity. Helicase activity is stimulated by PriC. Its function is as follows. Rep helicase is a single-stranded (ss)DNA-dependent ATPase involved in DNA replication; it can initiate unwinding at a nick in the DNA. It binds to ssDNA and acts in a progressive fashion along the DNA in the 3' to 5' direction. Binds double-stranded (ds)DNA with a 5' ss- but not 3' ss-extension and forked structures with either lagging or leading ssDNA. Part of the PriC-Rep pathway for restart of stalled replication forks, which reloads the DnaB replicative helicase on sites other than the origin of replication. The sequence is that of ATP-dependent DNA helicase Rep from Escherichia coli (strain K12).